Consider the following 484-residue polypeptide: Protein nucleotidyltransferase YdiU (484 aa).

Residues Gly-81, Gly-83, Arg-84, Lys-103, Asp-115, Gly-116, Arg-166, and Arg-173 each coordinate ATP. Asp-244 (proton acceptor) is an active-site residue. Mg(2+) contacts are provided by Asn-245 and Asp-254. Asp-254 contacts ATP.

The protein belongs to the SELO family. It depends on Mg(2+) as a cofactor. The cofactor is Mn(2+).

It carries out the reaction L-seryl-[protein] + ATP = 3-O-(5'-adenylyl)-L-seryl-[protein] + diphosphate. It catalyses the reaction L-threonyl-[protein] + ATP = 3-O-(5'-adenylyl)-L-threonyl-[protein] + diphosphate. The enzyme catalyses L-tyrosyl-[protein] + ATP = O-(5'-adenylyl)-L-tyrosyl-[protein] + diphosphate. The catalysed reaction is L-histidyl-[protein] + UTP = N(tele)-(5'-uridylyl)-L-histidyl-[protein] + diphosphate. It carries out the reaction L-seryl-[protein] + UTP = O-(5'-uridylyl)-L-seryl-[protein] + diphosphate. It catalyses the reaction L-tyrosyl-[protein] + UTP = O-(5'-uridylyl)-L-tyrosyl-[protein] + diphosphate. Nucleotidyltransferase involved in the post-translational modification of proteins. It can catalyze the addition of adenosine monophosphate (AMP) or uridine monophosphate (UMP) to a protein, resulting in modifications known as AMPylation and UMPylation. This chain is Protein nucleotidyltransferase YdiU, found in Shewanella putrefaciens (strain CN-32 / ATCC BAA-453).